The sequence spans 351 residues: UDP-N-acetylglucosamine--N-acetylmuramyl-(pentapeptide) pyrophosphoryl-undecaprenol N-acetylglucosamine transferase (351 aa).

Residues 13 to 15 (TGG), N125, R161, S189, I241, 260 to 265 (ALTVCE), and Q285 contribute to the UDP-N-acetyl-alpha-D-glucosamine site.

This sequence belongs to the glycosyltransferase 28 family. MurG subfamily.

It is found in the cell inner membrane. The catalysed reaction is di-trans,octa-cis-undecaprenyl diphospho-N-acetyl-alpha-D-muramoyl-L-alanyl-D-glutamyl-meso-2,6-diaminopimeloyl-D-alanyl-D-alanine + UDP-N-acetyl-alpha-D-glucosamine = di-trans,octa-cis-undecaprenyl diphospho-[N-acetyl-alpha-D-glucosaminyl-(1-&gt;4)]-N-acetyl-alpha-D-muramoyl-L-alanyl-D-glutamyl-meso-2,6-diaminopimeloyl-D-alanyl-D-alanine + UDP + H(+). Its pathway is cell wall biogenesis; peptidoglycan biosynthesis. Functionally, cell wall formation. Catalyzes the transfer of a GlcNAc subunit on undecaprenyl-pyrophosphoryl-MurNAc-pentapeptide (lipid intermediate I) to form undecaprenyl-pyrophosphoryl-MurNAc-(pentapeptide)GlcNAc (lipid intermediate II). This is UDP-N-acetylglucosamine--N-acetylmuramyl-(pentapeptide) pyrophosphoryl-undecaprenol N-acetylglucosamine transferase from Haemophilus influenzae (strain PittGG).